Reading from the N-terminus, the 272-residue chain is Hemin import ATP-binding protein HmuV (272 aa).

Residues 2–255 (LNADHLHVAR…EPIARCYGFR (254 aa)) enclose the ABC transporter domain. An ATP-binding site is contributed by 34–41 (GRNGAGKS).

This sequence belongs to the ABC transporter superfamily. Heme (hemin) importer (TC 3.A.1.14.5) family. In terms of assembly, the complex is composed of two ATP-binding proteins (HmuV), two transmembrane proteins (HmuU) and a solute-binding protein (HmuT).

The protein resides in the cell inner membrane. Its function is as follows. Part of the ABC transporter complex HmuTUV involved in hemin import. Responsible for energy coupling to the transport system. The sequence is that of Hemin import ATP-binding protein HmuV from Burkholderia mallei (strain ATCC 23344).